Here is a 243-residue protein sequence, read N- to C-terminus: Chalcone--flavanone isomerase (243 aa).

Substrate contacts are provided by threonine 50, asparagine 115, and serine 192.

It belongs to the chalcone isomerase family.

It carries out the reaction a chalcone = a flavanone.. Its pathway is secondary metabolite biosynthesis; flavonoid biosynthesis. In terms of biological role, catalyzes the intramolecular cyclization of bicyclic chalcones into tricyclic (S)-flavanones. Responsible for the isomerization of 4,2',4',6'-tetrahydroxychalcone (also termed chalcone) into naringenin. The polypeptide is Chalcone--flavanone isomerase (CHI) (Ipomoea batatas (Sweet potato)).